A 287-amino-acid chain; its full sequence is Acetyl-coenzyme A carboxylase carboxyl transferase subunit beta (287 aa).

Residues 25–287 (VWTKCSACEQ…KMLNTHVIEE (263 aa)) form the CoA carboxyltransferase N-terminal domain. 4 residues coordinate Zn(2+): cysteine 29, cysteine 32, cysteine 48, and cysteine 51. The segment at 29–51 (CSACEQVLYRAELERNLEVCPKC) adopts a C4-type zinc-finger fold.

Belongs to the AccD/PCCB family. In terms of assembly, acetyl-CoA carboxylase is a heterohexamer composed of biotin carboxyl carrier protein (AccB), biotin carboxylase (AccC) and two subunits each of ACCase subunit alpha (AccA) and ACCase subunit beta (AccD). Requires Zn(2+) as cofactor.

It localises to the cytoplasm. It carries out the reaction N(6)-carboxybiotinyl-L-lysyl-[protein] + acetyl-CoA = N(6)-biotinyl-L-lysyl-[protein] + malonyl-CoA. It functions in the pathway lipid metabolism; malonyl-CoA biosynthesis; malonyl-CoA from acetyl-CoA: step 1/1. Component of the acetyl coenzyme A carboxylase (ACC) complex. Biotin carboxylase (BC) catalyzes the carboxylation of biotin on its carrier protein (BCCP) and then the CO(2) group is transferred by the transcarboxylase to acetyl-CoA to form malonyl-CoA. The sequence is that of Acetyl-coenzyme A carboxylase carboxyl transferase subunit beta from Aeromonas salmonicida (strain A449).